The following is a 166-amino-acid chain: Large ribosomal subunit protein uL10 (166 aa).

It belongs to the universal ribosomal protein uL10 family. Part of the ribosomal stalk of the 50S ribosomal subunit. The N-terminus interacts with L11 and the large rRNA to form the base of the stalk. The C-terminus forms an elongated spine to which L12 dimers bind in a sequential fashion forming a multimeric L10(L12)X complex.

In terms of biological role, forms part of the ribosomal stalk, playing a central role in the interaction of the ribosome with GTP-bound translation factors. This Geobacillus sp. (strain WCH70) protein is Large ribosomal subunit protein uL10.